The following is a 91-amino-acid chain: Large ribosomal subunit protein uL23c (91 aa).

The protein belongs to the universal ribosomal protein uL23 family. Part of the 50S ribosomal subunit.

The protein localises to the plastid. The protein resides in the chloroplast. Its function is as follows. Binds to 23S rRNA. The protein is Large ribosomal subunit protein uL23c (rpl23) of Pinus thunbergii (Japanese black pine).